Here is a 503-residue protein sequence, read N- to C-terminus: D-alanine--D-alanyl carrier protein ligase (503 aa).

Residue 151–152 (TS) coordinates ATP. D196 provides a ligand contact to D-alanine. 291–296 (NTYGPT) provides a ligand contact to ATP. V300 lines the D-alanine pocket. ATP contacts are provided by residues D382, 393–396 (YNGR), and K491. K491 is a D-alanine binding site.

It belongs to the ATP-dependent AMP-binding enzyme family. DltA subfamily.

Its subcellular location is the cytoplasm. The enzyme catalyses holo-[D-alanyl-carrier protein] + D-alanine + ATP = D-alanyl-[D-alanyl-carrier protein] + AMP + diphosphate. The protein operates within cell wall biogenesis; lipoteichoic acid biosynthesis. In terms of biological role, catalyzes the first step in the D-alanylation of lipoteichoic acid (LTA), the activation of D-alanine and its transfer onto the D-alanyl carrier protein (Dcp) DltC. In an ATP-dependent two-step reaction, forms a high energy D-alanyl-AMP intermediate, followed by transfer of the D-alanyl residue as a thiol ester to the phosphopantheinyl prosthetic group of the Dcp. D-alanylation of LTA plays an important role in modulating the properties of the cell wall in Gram-positive bacteria, influencing the net charge of the cell wall. The chain is D-alanine--D-alanyl carrier protein ligase from Bacillus anthracis (strain A0248).